Reading from the N-terminus, the 797-residue chain is Calcium-transporting ATPase CtpE (797 aa).

The next 3 helical transmembrane spans lie at 55-75, 215-235, and 254-274; these read LLLI…LLII, ILQF…YTQL, and VPMV…VGVV. Aspartate 301 serves as the catalytic 4-aspartylphosphate intermediate. Residues aspartate 301, threonine 303, and aspartate 536 each coordinate Mg(2+). Helical transmembrane passes span 601–621, 633–653, 667–687, 703–723, 729–749, and 764–784; these read TVYS…AIPL, IHVT…LSLA, VMTS…VTYL, ASTA…AVIA, WRLA…SLPL, and TSIA…MWWI.

It belongs to the cation transport ATPase (P-type) (TC 3.A.3) family.

It is found in the cell membrane. It catalyses the reaction Ca(2+)(in) + ATP + H2O = Ca(2+)(out) + ADP + phosphate + H(+). Functionally, P-type ATPase involved in specific uptake of calcium. This chain is Calcium-transporting ATPase CtpE (ctpE), found in Mycobacterium tuberculosis (strain CDC 1551 / Oshkosh).